Consider the following 125-residue polypeptide: MVTINQLVRKSRSNKIIKTNVPALSSCPQKRGVCIRVYTTTPKKPNSALRKVCRVRLTNGFEVTSYIGGEGHNLQEHSSVLIRGGRVKDLPGVRYHIVRGALDCAGVKNRKKARSKYGVKKIKNK.

3-methylthioaspartic acid is present on Asp-89.

Belongs to the universal ribosomal protein uS12 family. Part of the 30S ribosomal subunit. Contacts proteins S8 and S17. May interact with IF1 in the 30S initiation complex.

Its function is as follows. With S4 and S5 plays an important role in translational accuracy. Functionally, interacts with and stabilizes bases of the 16S rRNA that are involved in tRNA selection in the A site and with the mRNA backbone. Located at the interface of the 30S and 50S subunits, it traverses the body of the 30S subunit contacting proteins on the other side and probably holding the rRNA structure together. The combined cluster of proteins S8, S12 and S17 appears to hold together the shoulder and platform of the 30S subunit. In Wigglesworthia glossinidia brevipalpis, this protein is Small ribosomal subunit protein uS12.